A 607-amino-acid chain; its full sequence is Elongation factor 4 (607 aa).

Residues 11-193 enclose the tr-type G domain; that stretch reads ENIRNFSIIA…KIVEVVPAPD (183 aa). Residues 23–28 and 140–143 contribute to the GTP site; these read DHGKST and NKID.

It belongs to the TRAFAC class translation factor GTPase superfamily. Classic translation factor GTPase family. LepA subfamily.

The protein localises to the cell membrane. It carries out the reaction GTP + H2O = GDP + phosphate + H(+). Its function is as follows. Required for accurate and efficient protein synthesis under certain stress conditions. May act as a fidelity factor of the translation reaction, by catalyzing a one-codon backward translocation of tRNAs on improperly translocated ribosomes. Back-translocation proceeds from a post-translocation (POST) complex to a pre-translocation (PRE) complex, thus giving elongation factor G a second chance to translocate the tRNAs correctly. Binds to ribosomes in a GTP-dependent manner. This is Elongation factor 4 from Staphylococcus aureus (strain MW2).